Here is a 150-residue protein sequence, read N- to C-terminus: MVHTTSPLLLLLLLSLALVAPSLSARKCSLTGKWTNNLGSIMTIRAVNSRGEFAGTYLTAVADNPGNIKLSPLLGIQHKRACQPTFGFTVHWNFSESTSVFVGQCFIDRSGKEVLKTKWLQRLAVDDISDDWKATRVGYNNFTRQRTVEE.

An N-terminal signal peptide occupies residues 1–24; it reads MVHTTSPLLLLLLLSLALVAPSLS. The region spanning 26–147 is the Avidin-like domain; sequence RKCSLTGKWT…GYNNFTRQRT (122 aa). Cys28 and Cys105 are disulfide-bonded. 5 residues coordinate biotin: Asn36, Ser40, Tyr57, Thr59, and Asp63. N-linked (GlcNAc...) asparagine glycosylation occurs at Asn93. Residues Ser95, Ser99, and Asn140 each contribute to the biotin site. Asn141 carries N-linked (GlcNAc...) asparagine glycosylation.

The protein belongs to the avidin/streptavidin family. In terms of assembly, homotetramer. Post-translationally, glycosylated.

The protein localises to the secreted. Its function is as follows. Forms a strong non-covalent specific complex with biotin. This chain is Avidin-related protein 3 (AVR3), found in Gallus gallus (Chicken).